A 248-amino-acid polypeptide reads, in one-letter code: 1-(5-phosphoribosyl)-5-[(5-phosphoribosylamino)methylideneamino] imidazole-4-carboxamide isomerase (248 aa).

D8 functions as the Proton acceptor in the catalytic mechanism. D131 acts as the Proton donor in catalysis.

This sequence belongs to the HisA/HisF family.

The protein resides in the cytoplasm. It carries out the reaction 1-(5-phospho-beta-D-ribosyl)-5-[(5-phospho-beta-D-ribosylamino)methylideneamino]imidazole-4-carboxamide = 5-[(5-phospho-1-deoxy-D-ribulos-1-ylimino)methylamino]-1-(5-phospho-beta-D-ribosyl)imidazole-4-carboxamide. Its pathway is amino-acid biosynthesis; L-histidine biosynthesis; L-histidine from 5-phospho-alpha-D-ribose 1-diphosphate: step 4/9. The polypeptide is 1-(5-phosphoribosyl)-5-[(5-phosphoribosylamino)methylideneamino] imidazole-4-carboxamide isomerase (Paracidovorax citrulli (strain AAC00-1) (Acidovorax citrulli)).